The chain runs to 201 residues: Retinol-binding protein 4 (201 aa).

An N-terminal signal peptide occupies residues 1 to 18 (MEWVWALVLLAALGGGSA). 3 disulfide bridges follow: C22–C178, C88–C192, and C138–C147. Q116 contacts substrate. Omega-N-methylarginine is present on R139.

The protein belongs to the calycin superfamily. Lipocalin family. As to quaternary structure, interacts with TTR. Interaction with TTR prevents its loss by filtration through the kidney glomeruli. Interacts with STRA6.

The protein localises to the secreted. In terms of biological role, retinol-binding protein that mediates retinol transport in blood plasma. Delivers retinol from the liver stores to the peripheral tissues. Transfers the bound all-trans retinol to STRA6, that then facilitates retinol transport across the cell membrane. The sequence is that of Retinol-binding protein 4 (Rbp4) from Mus musculus (Mouse).